We begin with the raw amino-acid sequence, 566 residues long: MKQSMVFSPTLREVPADAEIKSHQLLLRAGFMRQNASGIYSFLPFGLKVLHKVERIVREEMERAGAVELLMPAMQASELWQESGRWYSYGSELMRMKDRNAREFALGATHEEVITDLVRDEIKSYKKLPLTLYQIQTKFRDEQRPRFGLLRGREFLMKDAYSFHATQESLDEVYSGLYKAYSNIFARCGLNFRAVIADSGAMGGKDTHEFMVLSDVGEDTIAYSDTSDYAANIEMAPVVATYTKSDEAEKALEKVATPDQKAIEEVSAFLNIAAEKCIKSMVFKVDAKLVVVLVRGDHEVNDVKVKNVYGASVVELASHEEIKELLNCEVGSLGPIGVTGDIEIIADHAVASIVNGCSGANEEGFHYVNVNPERDFKVSQYTDLRFIQEGDQSPDGNGTILFARGIEVGHVFKLGTRYSEAMNATFLDENGKTKPLIMGCYGIGVSRTVAAIAEQFNDENGLVWPKSVAPFHVHVIPVNMKSDAQREMGENIYNSLQEQGYEVLLDDRAERAGVKFADADLFGLPVRVTVGKKADEGIVEVKVRATGESEEVKVEELQTYIANILK.

The protein belongs to the class-II aminoacyl-tRNA synthetase family. ProS type 1 subfamily. In terms of assembly, homodimer.

The protein localises to the cytoplasm. The enzyme catalyses tRNA(Pro) + L-proline + ATP = L-prolyl-tRNA(Pro) + AMP + diphosphate. In terms of biological role, catalyzes the attachment of proline to tRNA(Pro) in a two-step reaction: proline is first activated by ATP to form Pro-AMP and then transferred to the acceptor end of tRNA(Pro). As ProRS can inadvertently accommodate and process non-cognate amino acids such as alanine and cysteine, to avoid such errors it has two additional distinct editing activities against alanine. One activity is designated as 'pretransfer' editing and involves the tRNA(Pro)-independent hydrolysis of activated Ala-AMP. The other activity is designated 'posttransfer' editing and involves deacylation of mischarged Ala-tRNA(Pro). The misacylated Cys-tRNA(Pro) is not edited by ProRS. This chain is Proline--tRNA ligase, found in Bacillus mycoides (strain KBAB4) (Bacillus weihenstephanensis).